Here is a 401-residue protein sequence, read N- to C-terminus: Beta-ketoadipyl-CoA thiolase (401 aa).

Cys90 (acyl-thioester intermediate) is an active-site residue. Active-site proton acceptor residues include His357 and Cys387.

This sequence belongs to the thiolase-like superfamily. Thiolase family.

It catalyses the reaction succinyl-CoA + acetyl-CoA = 3-oxoadipyl-CoA + CoA. It functions in the pathway aromatic compound metabolism; beta-ketoadipate pathway; acetyl-CoA and succinyl-CoA from 3-oxoadipate: step 2/2. Functionally, catalyzes thiolytic cleavage of beta-ketoadipyl-CoA to succinyl-CoA and acetyl-CoA. The chain is Beta-ketoadipyl-CoA thiolase (pcaF) from Acinetobacter baylyi (strain ATCC 33305 / BD413 / ADP1).